The primary structure comprises 497 residues: Cytochrome P450 2D6 (497 aa).

Aspartate 301 serves as a coordination point for substrate. Cysteine 443 provides a ligand contact to heme.

The protein belongs to the cytochrome P450 family. Heme is required as a cofactor.

The protein localises to the endoplasmic reticulum membrane. It localises to the microsome membrane. It catalyses the reaction (5Z,8Z,11Z,14Z)-eicosatetraenoate + reduced [NADPH--hemoprotein reductase] + O2 = (8R,9S)-epoxy-(5Z,11Z,14Z)-eicosatrienoate + oxidized [NADPH--hemoprotein reductase] + H2O + H(+). The catalysed reaction is (5Z,8Z,11Z,14Z)-eicosatetraenoate + reduced [NADPH--hemoprotein reductase] + O2 = (11R,12S)-epoxy-(5Z,8Z,14Z)-eicosatrienoate + oxidized [NADPH--hemoprotein reductase] + H2O + H(+). It carries out the reaction (5Z,8Z,11Z,14Z)-eicosatetraenoate + reduced [NADPH--hemoprotein reductase] + O2 = (14S,15R)-epoxy-(5Z,8Z,11Z)-eicosatrienoate + oxidized [NADPH--hemoprotein reductase] + H2O + H(+). The enzyme catalyses N-(5Z,8Z,11Z,14Z-eicosatetraenoyl)-ethanolamine + reduced [NADPH--hemoprotein reductase] + O2 = N-(8,9-epoxy-5Z,11Z,14Z-eicosatrienoyl)-ethanolamine + oxidized [NADPH--hemoprotein reductase] + H2O + H(+). It catalyses the reaction N-(5Z,8Z,11Z,14Z-eicosatetraenoyl)-ethanolamine + reduced [NADPH--hemoprotein reductase] + O2 = N-(11,12-epoxy-5Z,8Z,14Z-eicosatrienoyl)-ethanolamine + oxidized [NADPH--hemoprotein reductase] + H2O + H(+). The catalysed reaction is N-(5Z,8Z,11Z,14Z-eicosatetraenoyl)-ethanolamine + reduced [NADPH--hemoprotein reductase] + O2 = N-(14,15-epoxy-5Z,8Z,11Z-eicosatrienoyl)-ethanolamine + oxidized [NADPH--hemoprotein reductase] + H2O + H(+). It carries out the reaction N-(5Z,8Z,11Z,14Z-eicosatetraenoyl)-ethanolamine + reduced [NADPH--hemoprotein reductase] + O2 = N-(20-hydroxy-5Z,8Z,11Z,14Z-eicosatetraenoyl)-ethanolamine + oxidized [NADPH--hemoprotein reductase] + H2O + H(+). The enzyme catalyses (5Z,8Z,11Z,14Z,17Z)-eicosapentaenoate + reduced [NADPH--hemoprotein reductase] + O2 = (17S,18R)-epoxy-(5Z,8Z,11Z,14Z)-eicosatetraenoate + oxidized [NADPH--hemoprotein reductase] + H2O + H(+). It catalyses the reaction (4Z,7Z,10Z,13Z,16Z,19Z)-docosahexaenoate + reduced [NADPH--hemoprotein reductase] + O2 = (19R,20S)-epoxy-(4Z,7Z,10Z,13Z,16Z)-docosapentaenoate + oxidized [NADPH--hemoprotein reductase] + H2O + H(+). The catalysed reaction is (4Z,7Z,10Z,13Z,16Z,19Z)-docosahexaenoate + reduced [NADPH--hemoprotein reductase] + O2 = (19S,20R)-epoxy-(4Z,7Z,10Z,13Z,16Z)-docosapentaenoate + oxidized [NADPH--hemoprotein reductase] + H2O + H(+). It carries out the reaction cholesterol + reduced [NADPH--hemoprotein reductase] + O2 = 25-hydroxycholesterol + oxidized [NADPH--hemoprotein reductase] + H2O + H(+). The enzyme catalyses all-trans-retinol + reduced [NADPH--hemoprotein reductase] + O2 = all-trans-retinal + oxidized [NADPH--hemoprotein reductase] + 2 H2O + H(+). It participates in cofactor metabolism; retinol metabolism. Its pathway is lipid metabolism; fatty acid metabolism. The protein operates within steroid metabolism; cholesterol metabolism. In terms of biological role, a cytochrome P450 monooxygenase involved in the metabolism of fatty acids, steroids and retinoids. Mechanistically, uses molecular oxygen inserting one oxygen atom into a substrate, and reducing the second into a water molecule, with two electrons provided by NADPH via cytochrome P450 reductase (NADPH--hemoprotein reductase). Catalyzes the epoxidation of double bonds of polyunsaturated fatty acids (PUFA). Metabolizes endocannabinoid arachidonoylethanolamide (anandamide) to 20-hydroxyeicosatetraenoic acid ethanolamide (20-HETE-EA) and 8,9-, 11,12-, and 14,15-epoxyeicosatrienoic acid ethanolamides (EpETrE-EAs), potentially modulating endocannabinoid system signaling. Catalyzes the hydroxylation of carbon-hydrogen bonds. Metabolizes cholesterol toward 25-hydroxycholesterol, a physiological regulator of cellular cholesterol homeostasis. Catalyzes the oxidative transformations of all-trans retinol to all-trans retinal, a precursor for the active form all-trans-retinoic acid. Also involved in the oxidative metabolism of drugs such as antiarrhythmics, adrenoceptor antagonists, and tricyclic antidepressants. The protein is Cytochrome P450 2D6 (CYP2D6) of Pan troglodytes (Chimpanzee).